Consider the following 355-residue polypeptide: NADH dehydrogenase [ubiquinone] 1 alpha subcomplex subunit 10, mitochondrial (355 aa).

Residues 1 to 35 (MALRLLKLGATSASVRVVAAGAQRVRGIHSSVQCK) constitute a mitochondrion transit peptide. Serine 250 is modified (phosphoserine; by PINK1). Lysine 285 bears the N6-succinyllysine mark.

It belongs to the complex I NDUFA10 subunit family. Complex I is composed of 45 different subunits. This a component of the hydrophobic protein fraction. FAD is required as a cofactor. Post-translationally, phosphorylation at Ser-250 by PINK1 is required for the binding and/or reduction of the complex I substrate ubiquinone.

It localises to the mitochondrion matrix. Its function is as follows. Accessory subunit of the mitochondrial membrane respiratory chain NADH dehydrogenase (Complex I), that is believed not to be involved in catalysis. Complex I functions in the transfer of electrons from NADH to the respiratory chain. The immediate electron acceptor for the enzyme is believed to be ubiquinone. The polypeptide is NADH dehydrogenase [ubiquinone] 1 alpha subcomplex subunit 10, mitochondrial (NDUFA10) (Pongo pygmaeus (Bornean orangutan)).